The primary structure comprises 673 residues: uncharacterized protein (673 aa).

Residues 1–208 (MSTHSNDYFS…STGQLELPPD (208 aa)) are Cytoplasmic-facing. Phosphoserine is present on residues S57, S112, and S172. The helical transmembrane segment at 209–229 (GGYGWVVTFCVFLTMFSTWGC) threads the bilayer. A glycan (N-linked (GlcNAc...) asparagine) is linked at N230. At 230 to 255 (NASFGVDLAYYLNHDTYPGASKYDYA) the chain is on the lumenal side. A helical transmembrane segment spans residues 256-276 (LIAGLTVFLGQLLSPLVMALM). Residue R277 is a topological domain, cytoplasmic. A helical transmembrane segment spans residues 278–298 (IIGLRTTMLFGDAVMLAAYLL). Over 299–315 (ASFTTKLWQLYVTQGFM) the chain is Lumenal. The helical transmembrane segment at 316-336 (VGCSISLIFVPATTVLPGWFL) threads the bilayer. Over 337-339 (KKR) the chain is Cytoplasmic. Residues 340 to 360 (AVAMGVSLLGTGAGGVVYGLA) form a helical membrane-spanning segment. Topologically, residues 361–372 (TNKMLSDFGNTR) are lumenal. Residues 373–393 (WCLRIIGISCSISVLVAIALL) traverse the membrane as a helical segment. Residues 394–426 (KERNPTPAIGLKSPRAMFEQLKAMFSLKVITKP) are Cytoplasmic-facing. Residues 427–447 (FVVLIALWFMFALFAYNMMVF) traverse the membrane as a helical segment. At 448–504 (TLSSYAISKGLSSHDASTLTAILNGSQSIGRPLMGLAGDKFGRANVTIVLTTLLTIY) the chain is on the lumenal side. N471 and N492 each carry an N-linked (GlcNAc...) asparagine glycan. A helical transmembrane segment spans residues 505-525 (MFAFWIPAHTFVQLIFFSILV). At 526–549 (GSCVGVANVMNTVLIADMVKPEEF) the chain is on the cytoplasmic side. Residues 550–570 (LPAWAFVNYCGAPFLLVCEVI) traverse the membrane as a helical segment. At 571–584 (AQALTVEKDKSNPY) the chain is on the lumenal side. Residues 585 to 605 (LHAQIFCGCCFIAALILISIL) form a helical membrane-spanning segment. The Cytoplasmic segment spans residues 606-673 (REYSIRMKLT…FLRMVYPMKV (68 aa)). S637 is subject to Phosphoserine.

This sequence belongs to the major facilitator superfamily. Monocarboxylate porter (TC 2.A.1.13) family.

The protein localises to the endoplasmic reticulum membrane. This is an uncharacterized protein from Saccharomyces cerevisiae (strain ATCC 204508 / S288c) (Baker's yeast).